The primary structure comprises 957 residues: Melanoma-associated antigen E1 (957 aa).

Positions 1 to 433 (MSLVSQNSRR…RNPSKCSIVL (433 aa)) are disordered. 2 stretches are compositionally biased toward polar residues: residues 85-96 (SEASSASGQPTV) and 104-130 (LLAT…SVTL). Residues 138-156 (TSRPPTSSEEPSTSVPATP) are compositionally biased toward low complexity. 6 stretches are compositionally biased toward polar residues: residues 158-177 (EGTS…TSVV), 220-232 (LSTS…TEGL), 256-306 (RSTT…GPST), 328-344 (LSTS…STSV), 364-380 (RSTS…DTSV), and 414-428 (TLFS…NPSK). 2 MAGE domains span residues 491–690 (MEQN…YNEA) and 745–936 (LESK…YREA). Residues 743 to 957 (SRLESKARKL…HRQFFVHNFR (215 aa)) are interaction with DTNA.

Interacts with DTNA. Interacts with TRIM28.

The protein resides in the cytoplasm. It is found in the perinuclear region. Its subcellular location is the nucleus. The protein localises to the cell membrane. Functionally, may enhance ubiquitin ligase activity of RING-type zinc finger-containing E3 ubiquitin-protein ligases. Proposed to act through recruitment and/or stabilization of the Ubl-conjugating enzyme (E2) at the E3:substrate complex. The chain is Melanoma-associated antigen E1 (MAGEE1) from Macaca fascicularis (Crab-eating macaque).